Reading from the N-terminus, the 527-residue chain is Phosphoenolpyruvate carboxykinase (ATP) (527 aa).

Substrate is bound by residues R56, Y191, and K197. ATP is bound by residues K197, H216, and 232 to 240 (GLSGTGKTT). K197 and H216 together coordinate Mn(2+). D253 lines the Mn(2+) pocket. ATP contacts are provided by residues E281, R318, 437 to 438 (RI), and T443. R318 provides a ligand contact to substrate.

It belongs to the phosphoenolpyruvate carboxykinase (ATP) family. Mn(2+) serves as cofactor.

It is found in the cytoplasm. The catalysed reaction is oxaloacetate + ATP = phosphoenolpyruvate + ADP + CO2. It functions in the pathway carbohydrate biosynthesis; gluconeogenesis. Involved in the gluconeogenesis. Catalyzes the conversion of oxaloacetate (OAA) to phosphoenolpyruvate (PEP) through direct phosphoryl transfer between the nucleoside triphosphate and OAA. In Shouchella clausii (strain KSM-K16) (Alkalihalobacillus clausii), this protein is Phosphoenolpyruvate carboxykinase (ATP).